The chain runs to 776 residues: Probable E3 ubiquitin-protein ligase HECTD2 (776 aa).

The disordered stretch occupies residues 1 to 46; sequence MSEAVRVPSPATPLVVAAPAPEERKGKESEREKLPPIVSAGAGATA. Over residues 7–20 the composition is skewed to low complexity; the sequence is VPSPATPLVVAAPA. Ser-9 carries the phosphoserine modification. Residues 21–34 show a composition bias toward basic and acidic residues; it reads PEERKGKESEREKL. The 340-residue stretch at 437 to 776 folds into the HECT domain; it reads KRADLKKKLK…ISNSEGFGLE (340 aa). Cys-744 serves as the catalytic Glycyl thioester intermediate.

It catalyses the reaction S-ubiquitinyl-[E2 ubiquitin-conjugating enzyme]-L-cysteine + [acceptor protein]-L-lysine = [E2 ubiquitin-conjugating enzyme]-L-cysteine + N(6)-ubiquitinyl-[acceptor protein]-L-lysine.. It functions in the pathway protein modification; protein ubiquitination. Functionally, E3 ubiquitin-protein ligase which accepts ubiquitin from an E2 ubiquitin-conjugating enzyme in the form of a thioester and then directly transfers the ubiquitin to targeted substrates. Its function is as follows. (Microbial infection) Catalyzes ubiquitination of Botulinum neurotoxin A light chain (LC) of C.botulinum neurotoxin type A (BoNT/A). This chain is Probable E3 ubiquitin-protein ligase HECTD2, found in Homo sapiens (Human).